A 368-amino-acid polypeptide reads, in one-letter code: E3 ubiquitin-protein ligase E3D (368 aa).

The residue at position 2 (alanine 2) is an N-acetylalanine. Residues proline 129–asparagine 159 carry the BRAT1-like motif motif. Residue cysteine 144 participates in Zn(2+) binding. The interval arginine 214–cysteine 236 is interaction with UBE2C. Residues leucine 332–methionine 368 form an HECT-like region.

Interacts with UBE2C/UbcH10 (E2 ubiquitin-conjugating enzyme). In vitro, interacts with cyclin-B. In terms of processing, ubiquitinated by UBCH10 (E2 ubiquitin-conjugating enzyme).

The protein resides in the cytoplasm. The enzyme catalyses S-ubiquitinyl-[E2 ubiquitin-conjugating enzyme]-L-cysteine + [acceptor protein]-L-lysine = [E2 ubiquitin-conjugating enzyme]-L-cysteine + N(6)-ubiquitinyl-[acceptor protein]-L-lysine.. The protein operates within protein modification; protein ubiquitination. E3 ubiquitin-protein ligase which accepts ubiquitin from specific E2 ubiquitin-conjugating enzymes, and transfers it to substrates, generally promoting their degradation by the proteasome. Independently of its E3 ubiquitin-protein ligase activity, acts as an inhibitor of CPSF3 endonuclease activity by blocking CPSF3 active site. This Mus musculus (Mouse) protein is E3 ubiquitin-protein ligase E3D (Ube3d).